A 516-amino-acid chain; its full sequence is Histidine ammonia-lyase 1 (516 aa).

A cross-link (5-imidazolinone (Ser-Gly)) is located at residues 147–149 (SSG). Ser-148 carries the 2,3-didehydroalanine (Ser) modification.

This sequence belongs to the PAL/histidase family. Contains an active site 4-methylidene-imidazol-5-one (MIO), which is formed autocatalytically by cyclization and dehydration of residues Ser-Ser-Gly.

The protein resides in the cytoplasm. It carries out the reaction L-histidine = trans-urocanate + NH4(+). It participates in amino-acid degradation; L-histidine degradation into L-glutamate; N-formimidoyl-L-glutamate from L-histidine: step 1/3. In Fusobacterium nucleatum subsp. nucleatum (strain ATCC 25586 / DSM 15643 / BCRC 10681 / CIP 101130 / JCM 8532 / KCTC 2640 / LMG 13131 / VPI 4355), this protein is Histidine ammonia-lyase 1 (hutH1).